Here is a 173-residue protein sequence, read N- to C-terminus: Crossover junction endodeoxyribonuclease RuvC (173 aa).

Catalysis depends on residues D8, E67, and D139. Positions 8, 67, and 139 each coordinate Mg(2+).

It belongs to the RuvC family. In terms of assembly, homodimer which binds Holliday junction (HJ) DNA. The HJ becomes 2-fold symmetrical on binding to RuvC with unstacked arms; it has a different conformation from HJ DNA in complex with RuvA. In the full resolvosome a probable DNA-RuvA(4)-RuvB(12)-RuvC(2) complex forms which resolves the HJ. Mg(2+) is required as a cofactor.

It is found in the cytoplasm. The enzyme catalyses Endonucleolytic cleavage at a junction such as a reciprocal single-stranded crossover between two homologous DNA duplexes (Holliday junction).. The RuvA-RuvB-RuvC complex processes Holliday junction (HJ) DNA during genetic recombination and DNA repair. Endonuclease that resolves HJ intermediates. Cleaves cruciform DNA by making single-stranded nicks across the HJ at symmetrical positions within the homologous arms, yielding a 5'-phosphate and a 3'-hydroxyl group; requires a central core of homology in the junction. The consensus cleavage sequence is 5'-(A/T)TT(C/G)-3'. Cleavage occurs on the 3'-side of the TT dinucleotide at the point of strand exchange. HJ branch migration catalyzed by RuvA-RuvB allows RuvC to scan DNA until it finds its consensus sequence, where it cleaves and resolves the cruciform DNA. The chain is Crossover junction endodeoxyribonuclease RuvC from Vibrio cholerae serotype O1 (strain ATCC 39541 / Classical Ogawa 395 / O395).